The following is a 381-amino-acid chain: Succinyl-diaminopimelate desuccinylase (381 aa).

Residue His-71 coordinates Zn(2+). Asp-73 is an active-site residue. Asp-104 provides a ligand contact to Zn(2+). Glu-138 (proton acceptor) is an active-site residue. Zn(2+)-binding residues include Glu-139, Glu-167, and His-353.

Belongs to the peptidase M20A family. DapE subfamily. As to quaternary structure, homodimer. Zn(2+) serves as cofactor. The cofactor is Co(2+).

The enzyme catalyses N-succinyl-(2S,6S)-2,6-diaminopimelate + H2O = (2S,6S)-2,6-diaminopimelate + succinate. Its pathway is amino-acid biosynthesis; L-lysine biosynthesis via DAP pathway; LL-2,6-diaminopimelate from (S)-tetrahydrodipicolinate (succinylase route): step 3/3. Functionally, catalyzes the hydrolysis of N-succinyl-L,L-diaminopimelic acid (SDAP), forming succinate and LL-2,6-diaminopimelate (DAP), an intermediate involved in the bacterial biosynthesis of lysine and meso-diaminopimelic acid, an essential component of bacterial cell walls. The protein is Succinyl-diaminopimelate desuccinylase of Shewanella pealeana (strain ATCC 700345 / ANG-SQ1).